Reading from the N-terminus, the 90-residue chain is U7-theraphotoxin-Hhn1f (90 aa).

The N-terminal stretch at 1-19 is a signal peptide; the sequence is MKTAIFTVVLALAVFAVLS. Positions 20–50 are excised as a propeptide; that stretch reads FGWEANEKALSEEFTELIHEKEAASETEARG. Intrachain disulfides connect C51–C65, C58–C70, and C64–C81.

It belongs to the neurotoxin 10 (Hwtx-1) family. 13 (Hntx-13) subfamily. Expressed by the venom gland.

The protein resides in the secreted. Its function is as follows. Ion channel inhibitor. In Cyriopagopus hainanus (Chinese bird spider), this protein is U7-theraphotoxin-Hhn1f.